Consider the following 84-residue polypeptide: UPF0457 protein BCE33L2961 (84 aa).

The protein belongs to the UPF0457 family.

The chain is UPF0457 protein BCE33L2961 from Bacillus cereus (strain ZK / E33L).